The following is a 496-amino-acid chain: Probable CtpA-like serine protease (496 aa).

The segment covering 1–16 (MDDKQHTSSSDDERAE) has biased composition (basic and acidic residues). The disordered stretch occupies residues 1–27 (MDDKQHTSSSDDERAEIATSNQDQETN). The segment covering 18 to 27 (ATSNQDQETN) has biased composition (polar residues). A helical transmembrane segment spans residues 39 to 59 (FISILIGTILITAVITVVAYI). The region spanning 124–206 (TKSFNEGVSG…TEVTLTVQRG (83 aa)) is the PDZ domain. Active-site charge relay system residues include Ser329, Asp340, and Lys354.

The protein belongs to the peptidase S41A family.

The protein localises to the cell membrane. The protein is Probable CtpA-like serine protease of Staphylococcus aureus (strain COL).